The sequence spans 201 residues: IMP cyclohydrolase (201 aa).

Belongs to the archaeal IMP cyclohydrolase family.

It catalyses the reaction IMP + H2O = 5-formamido-1-(5-phospho-D-ribosyl)imidazole-4-carboxamide. The protein operates within purine metabolism; IMP biosynthesis via de novo pathway; IMP from 5-formamido-1-(5-phospho-D-ribosyl)imidazole-4-carboxamide: step 1/1. Its function is as follows. Catalyzes the cyclization of 5-formylamidoimidazole-4-carboxamide ribonucleotide to IMP. The polypeptide is IMP cyclohydrolase (Methanococcus maripaludis (strain DSM 14266 / JCM 13030 / NBRC 101832 / S2 / LL)).